A 429-amino-acid chain; its full sequence is Ribosomal RNA small subunit methyltransferase B (429 aa).

S-adenosyl-L-methionine is bound by residues 254–260 (CAAPGGK), Asp-277, Asp-303, and Asp-322. The active-site Nucleophile is the Cys-375.

It belongs to the class I-like SAM-binding methyltransferase superfamily. RsmB/NOP family.

It localises to the cytoplasm. The enzyme catalyses cytidine(967) in 16S rRNA + S-adenosyl-L-methionine = 5-methylcytidine(967) in 16S rRNA + S-adenosyl-L-homocysteine + H(+). Specifically methylates the cytosine at position 967 (m5C967) of 16S rRNA. The chain is Ribosomal RNA small subunit methyltransferase B from Pectobacterium atrosepticum (strain SCRI 1043 / ATCC BAA-672) (Erwinia carotovora subsp. atroseptica).